We begin with the raw amino-acid sequence, 503 residues long: MRAKVRILNIRSGHFDVFINPKDAQEWKLHPNDLVKIESGKRSIYGSVVIGDFVESGEVGLSLDILDAYQFSEGELVSITPSETPESVRYIKKKMRGEKLRKVEIETIVRDIVDRKLRNTEISALVTAIEVNGLDMDEIAALTIAMAETGDMLDIDRKPIMDVHSIGGVPGNKTNIIVVPIVAAAGLTIPKTSSRAITSAAGTADVVEVFTNVTLSLDEIKRIVEKIGACLVWGGALNLAPADDLTIHVERRLSLDPRGLMLASIMSKKYAIGSQYILIDIPTGKGAKVETMEEARSLAKDFIELGKKLGQYVEVAITYGGQPIGYTVGPALEAKEALETLMTGKGPGSLVEKALGLAGILLEMGGVAPRGMGKKVAREILESGKAYEKIKEIIEEQGGDPNIKPEDIPIGDKTYTIHAQTSGYVTGIDNKAITAIAREAGAPEDKGAGVKLHVKVGEKVKEGDPLFTIHAESESRLDKAIILARRLEPIKIEGMVLQVLGNL.

AMP contacts are provided by residues Gly168, Ser194 to Ser199, and Thr203. The active-site Proton donor is Asp256. AMP contacts are provided by Ser264 and Lys288.

The protein belongs to the thymidine/pyrimidine-nucleoside phosphorylase family. Type 2 subfamily.

It catalyses the reaction AMP + phosphate = alpha-D-ribose 1,5-bisphosphate + adenine. The enzyme catalyses CMP + phosphate = cytosine + alpha-D-ribose 1,5-bisphosphate. It carries out the reaction UMP + phosphate = alpha-D-ribose 1,5-bisphosphate + uracil. In terms of biological role, catalyzes the conversion of AMP and phosphate to adenine and ribose 1,5-bisphosphate (R15P). Exhibits phosphorylase activity toward CMP and UMP in addition to AMP. Functions in an archaeal AMP degradation pathway, together with R15P isomerase and RubisCO. This is AMP phosphorylase (deoA) from Pyrococcus abyssi (strain GE5 / Orsay).